A 721-amino-acid chain; its full sequence is Ribosomal RNA large subunit methyltransferase K/L (721 aa).

A THUMP domain is found at 56 to 167; it reads GMYKACLWSR…REVVTVSIDL (112 aa).

The protein belongs to the methyltransferase superfamily. RlmKL family.

It is found in the cytoplasm. It carries out the reaction guanosine(2445) in 23S rRNA + S-adenosyl-L-methionine = N(2)-methylguanosine(2445) in 23S rRNA + S-adenosyl-L-homocysteine + H(+). The catalysed reaction is guanosine(2069) in 23S rRNA + S-adenosyl-L-methionine = N(2)-methylguanosine(2069) in 23S rRNA + S-adenosyl-L-homocysteine + H(+). In terms of biological role, specifically methylates the guanine in position 2445 (m2G2445) and the guanine in position 2069 (m7G2069) of 23S rRNA. The polypeptide is Ribosomal RNA large subunit methyltransferase K/L (Marinomonas sp. (strain MWYL1)).